The primary structure comprises 504 residues: uncharacterized protein (504 aa).

Residues 1–212 (MFMKSKAAGS…LYKTQDPVLD (212 aa)) constitute a propeptide that is removed on maturation.

This is an uncharacterized protein from Deinococcus radiodurans (strain ATCC 13939 / DSM 20539 / JCM 16871 / CCUG 27074 / LMG 4051 / NBRC 15346 / NCIMB 9279 / VKM B-1422 / R1).